The following is a 185-amino-acid chain: Casparian strip membrane protein 5 (185 aa).

The Cytoplasmic segment spans residues 1-25; sequence MKAEAVESGEASTIIAAPKRGINRG. Residues 26-46 form a helical membrane-spanning segment; sequence ISIADLILRGVAAIGTFASAL. At 47 to 75 the chain is on the extracellular side; sequence TMGTTSETLTIFTQPIMIRAKYNDLPSLT. The chain crosses the membrane as a helical span at residues 76-96; sequence FFVIANSIVCGYLVLSIPLSI. Over 97–108 the chain is Cytoplasmic; the sequence is SHFIRREARITR. Residues 109-129 traverse the membrane as a helical segment; sequence IILVIFDTAMVELLTAGASAA. Over 130 to 160 the chain is Extracellular; sequence TVVVYLAHKRNANWLAICQQFNNFCERISGS. Residues 161–181 form a helical membrane-spanning segment; sequence LIGSFASIIMIMLIIITSAVA. Residues 182 to 185 are Cytoplasmic-facing; it reads LSRH.

It belongs to the Casparian strip membrane proteins (CASP) family. Homodimer and heterodimers.

Its subcellular location is the cell membrane. Its function is as follows. Regulates membrane-cell wall junctions and localized cell wall deposition. Required for establishment of the Casparian strip membrane domain (CSD) and the subsequent formation of Casparian strips, a cell wall modification of the root endodermis that determines an apoplastic barrier between the intraorganismal apoplasm and the extraorganismal apoplasm and prevents lateral diffusion. The polypeptide is Casparian strip membrane protein 5 (Populus trichocarpa (Western balsam poplar)).